We begin with the raw amino-acid sequence, 215 residues long: Probable GTP-binding protein EngB (215 aa).

The region spanning 31–215 is the EngB-type G domain; the sequence is GPPEIAFAGR…RAAILQAIAV (185 aa). GTP contacts are provided by residues 39-46, 66-70, 93-96, 160-163, and 194-196; these read GRSNVGKS, GRTQE, DMPG, TKSD, and TSS. The Mg(2+) site is built by serine 46 and threonine 68.

It belongs to the TRAFAC class TrmE-Era-EngA-EngB-Septin-like GTPase superfamily. EngB GTPase family. Mg(2+) is required as a cofactor.

Functionally, necessary for normal cell division and for the maintenance of normal septation. The polypeptide is Probable GTP-binding protein EngB (Bartonella quintana (strain Toulouse) (Rochalimaea quintana)).